The chain runs to 180 residues: MAKLIVAIGNPRHGYANTRHNAGFLLADRLVEELQGPPFKPLSKCHALMTLVESSSGPLVFIKPTTFVNLSGKAVVLAKKYFNVALSHILVLADDVNRSFGKLRLCFNGGSGGHNGLKSITASLGSNEYWQLRFGVGRPLEEGVELSNFVLGKFSEEENLQLGSIFVEASTLFTEWCSKF.

Y15 is a binding site for tRNA. Residue H20 is the Proton acceptor of the active site. TRNA is bound by residues F67, N69, and N115.

The protein belongs to the PTH family. In terms of assembly, monomer.

It is found in the cytoplasm. It carries out the reaction an N-acyl-L-alpha-aminoacyl-tRNA + H2O = an N-acyl-L-amino acid + a tRNA + H(+). Its function is as follows. Hydrolyzes ribosome-free peptidyl-tRNAs (with 1 or more amino acids incorporated), which drop off the ribosome during protein synthesis, or as a result of ribosome stalling. Catalyzes the release of premature peptidyl moieties from peptidyl-tRNA molecules trapped in stalled 50S ribosomal subunits, and thus maintains levels of free tRNAs and 50S ribosomes. In Chlamydia pneumoniae (Chlamydophila pneumoniae), this protein is Peptidyl-tRNA hydrolase.